Consider the following 384-residue polypeptide: Glucans biosynthesis protein C (384 aa).

Helical transmembrane passes span 17–37 (AWLMLLGIPFHISLIYSTHSW), 54–74 (FIHAFRMQVFFVISGYFSYML), 91–111 (VGIPMLTAIPLLTLPQFILLQ), 140–160 (LWFLLVLVILTTVSIGIFTWF), 173–193 (AISLAKLSLIFFLLGVAYAAI), 212–232 (FIVMQTLFYVPFFILGALAFI), 240–260 (FTTPSRGCTLGAAVAFIAYLL), 274–294 (TESVITMVMGLWMVNVVFSLG), 311–331 (ASLFIYLVHHPLTLFFGAYIT), and 338–358 (LIGFLCGLIFVMGIALILYEI).

The protein belongs to the acyltransferase 3 family. OpgC subfamily.

The protein resides in the cell membrane. Its pathway is glycan metabolism; osmoregulated periplasmic glucan (OPG) biosynthesis. Necessary for the succinyl substitution of periplasmic glucans. Could catalyze the transfer of succinyl residues from the cytoplasmic side of the membrane to the nascent glucan backbones on the periplasmic side of the membrane. The chain is Glucans biosynthesis protein C from Salmonella typhi.